We begin with the raw amino-acid sequence, 240 residues long: Endo-chitosanase B (240 aa).

The first 17 residues, 1–17 (MRLSEILAVALVTGATA), serve as a signal peptide directing secretion. Asn-86 carries an N-linked (GlcNAc...) asparagine glycan.

Belongs to the glycosyl hydrolase 75 family.

It is found in the secreted. The catalysed reaction is Endohydrolysis of beta-(1-&gt;4)-linkages between D-glucosamine residues in a partly acetylated chitosan.. Chitosanase catalyzing the endo-type cleavage of chitosan, the deacylated form of chitin. Chitosanase may be crucial in the degradation of the deacetylated portion of chitin in the fungal cell wall. Chitoolisaccharides produced by the hydrolysis of partially N-acetylated chitosan are known to have many biological activities, including antibacterial activity, immune-enhancing effects, and elicitor activity. The sequence is that of Endo-chitosanase B (csnB) from Aspergillus oryzae (Yellow koji mold).